Here is a 451-residue protein sequence, read N- to C-terminus: Phosphoglucosamine mutase (451 aa).

Catalysis depends on Ser-102, which acts as the Phosphoserine intermediate. 4 residues coordinate Mg(2+): Ser-102, Asp-243, Asp-245, and Asp-247. Position 102 is a phosphoserine (Ser-102).

It belongs to the phosphohexose mutase family. It depends on Mg(2+) as a cofactor. In terms of processing, activated by phosphorylation.

It carries out the reaction alpha-D-glucosamine 1-phosphate = D-glucosamine 6-phosphate. Its function is as follows. Catalyzes the conversion of glucosamine-6-phosphate to glucosamine-1-phosphate. The chain is Phosphoglucosamine mutase from Brucella canis (strain ATCC 23365 / NCTC 10854 / RM-666).